The sequence spans 394 residues: Small ribosomal subunit protein uS2m (394 aa).

The N-terminal 25 residues, 1–25, are a transit peptide targeting the mitochondrion; sequence MQRHVFARNFRRLSLLRNPSLTKRF.

It belongs to the universal ribosomal protein uS2 family. Component of the mitochondrial small ribosomal subunit (mt-SSU). Mature yeast 74S mitochondrial ribosomes consist of a small (37S) and a large (54S) subunit. The 37S small subunit contains a 15S ribosomal RNA (15S mt-rRNA) and 34 different proteins. The 54S large subunit contains a 21S rRNA (21S mt-rRNA) and 46 different proteins.

The protein resides in the mitochondrion. In terms of biological role, component of the mitochondrial ribosome (mitoribosome), a dedicated translation machinery responsible for the synthesis of mitochondrial genome-encoded proteins, including at least some of the essential transmembrane subunits of the mitochondrial respiratory chain. The mitoribosomes are attached to the mitochondrial inner membrane and translation products are cotranslationally integrated into the membrane. The chain is Small ribosomal subunit protein uS2m (MRP4) from Saccharomyces cerevisiae (strain ATCC 204508 / S288c) (Baker's yeast).